Here is a 281-residue protein sequence, read N- to C-terminus: MSKYKDAKELAGLTLGQKTDYIDQYDASLLQPVPRSLNRSDLNLGESLPFTGYDIWTLYELSWLNSKGLPQVAIGEVRLPASSPNLIESKSFKLYLNSFNQTRFDSWQQIADTLQKDLTACAGQEVDVTIQPLEDFTDQTVINFAGNCIDEQDIEINSYDFDAQYLKDAAEGEIVTEDLHSHLLKSNCLITNQPDWGSVKISYKGKQINREKLLRYLVSFRNHNEFHEQCVERIFTDIMKFCQPELLTVYARYTRRGGLDINPYRTNQGKTPSDNFRLARQ.

Isoleucine 87–serine 89 is a substrate binding site. Residue serine 89 to lysine 90 coordinates NADPH. Catalysis depends on cysteine 188, which acts as the Thioimide intermediate. The active-site Proton donor is aspartate 195. Residue histidine 227–glutamate 228 coordinates substrate. Arginine 256–glycine 257 is an NADPH binding site.

Belongs to the GTP cyclohydrolase I family. QueF type 2 subfamily. As to quaternary structure, homodimer.

The protein localises to the cytoplasm. The enzyme catalyses 7-aminomethyl-7-carbaguanine + 2 NADP(+) = 7-cyano-7-deazaguanine + 2 NADPH + 3 H(+). It functions in the pathway tRNA modification; tRNA-queuosine biosynthesis. Functionally, catalyzes the NADPH-dependent reduction of 7-cyano-7-deazaguanine (preQ0) to 7-aminomethyl-7-deazaguanine (preQ1). This chain is NADPH-dependent 7-cyano-7-deazaguanine reductase, found in Photobacterium profundum (strain SS9).